A 63-amino-acid polypeptide reads, in one-letter code: Large ribosomal subunit protein uL29 (63 aa).

It belongs to the universal ribosomal protein uL29 family.

The chain is Large ribosomal subunit protein uL29 from Ectopseudomonas mendocina (strain ymp) (Pseudomonas mendocina).